The primary structure comprises 61 residues: Arabinogalactan protein 15 (61 aa).

The N-terminal stretch at 1-22 (MAISKASIVVLMMVIISVVASA) is a signal peptide. Gln23 carries the pyrrolidone carboxylic acid modification. 4-hydroxyproline occurs at positions 27, 29, and 31. O-linked (Ara...) hydroxyproline glycosylation is found at Pro27, Pro29, and Pro31. Residue Ser35 is the site of GPI-anchor amidated serine attachment. A propeptide spans 36-61 (SAISASFVSAGVAAVAALVFGSALRI) (removed in mature form).

The protein belongs to the AG-peptide AGP family. In terms of processing, contains 4-hydroxyproline; hydroxylated on Pro-27, Pro-29 and Pro-31. O-glycosylated on hydroxyprolines; noncontiguous hydroxylproline residues are glycosylated with arabinogalactan. In terms of tissue distribution, expressed in reproductive tissues. Expressed in chalaza, funiculus, stigma, septum, style, integument and transmitting tract.

It localises to the cell membrane. Proteoglycan that seems to be implicated in diverse developmental roles such as differentiation, cell-cell recognition, embryogenesis and programmed cell death. This chain is Arabinogalactan protein 15, found in Arabidopsis thaliana (Mouse-ear cress).